The sequence spans 959 residues: MTEPKSYKDTVNLPQTDFSMRANAVQREPEIQQFWTENCIYEQLSQNNPEDLFILHDGPPYANGSLHMGHALNKTLKDIINKYKLLRGHKVRYVPGWDCHGLPIELKVLQSMKSEEREGLTPLKLRRKARDFALKTQQEQAEGFKRYGVWGDWENPYLTLTPEYEAAQIGVFGQMALKGYIYRGLKPVHWSPSSRTALAEAELEYPEGHTSQSIFAAFPIIKSSKDAQEILDPFLSNLGVAIWTTTPWTLPGNLAVALNPELTYAIVEQTSNLCNYQYIIVAADLVERLSATFSTELTVKATLPGQILEHTIYRHPLYDRESEIVIGGDYVTTESGTGLVHTAPGHGQEDYIVGQRYGLQVLSPVDDAGNFTEEAGQFSGLNVLKDANQAIINELKNKGSLLKEEPYLHKYPYDWRTKKPTIFRATEQWFASVEGFREAALEAIKSVNWIPPQGENRITPMVSDRSDWCISRQRSWGVPIPVFYNEETNEPLLTEETINHVQAIIAKQGSDAWWELSIEELLPEQYKKDAHKYRRGTDTMDVWFDSGSSWAAVAKQREELKYPVDIYLEGSDQHRGWFQSSLLTSVAVNGIAPYKTVLTHGFVLDEKGHKMSKSLGNIVDPLVIINGGKNQKQEPPYGADVLRLWVSSVDYSSDVPIGQTILKQLSDVYRKIRNTARFLLGNLHDFDPEKDTVSYDQLPELDQYMLHRITEVFTEVTDAFEKFQFFRFFQTVQNFCVVDLSNFYLDIAKDRLYISDTNSLRRRSCQTVLKVAVESLAKAIAPVLCHMAEDIWQFLPYKTPYQSVFASGWVEMQKQWERPELTASWGKLRQIRTEVNKVLEQARNEKAIGSSLDAKVLLYVSDQDFKKQLESFNPNDSLKGNQVDELRYLVLASQVELVDSLEAIKKADYQSESELVSVGVVKAEGQKCDRCWNYSTKVGEFSDDPTICERCNAALVGEF.

Residues 60–70 carry the 'HIGH' region motif; the sequence is PYANGSLHMGH. L-isoleucyl-5'-AMP is bound at residue Glu-569. The 'KMSKS' region signature appears at 610–614; sequence KMSKS. Residue Lys-613 participates in ATP binding. Cys-928, Cys-931, Cys-948, and Cys-951 together coordinate Zn(2+).

This sequence belongs to the class-I aminoacyl-tRNA synthetase family. IleS type 1 subfamily. As to quaternary structure, monomer. The cofactor is Zn(2+).

The protein resides in the cytoplasm. It catalyses the reaction tRNA(Ile) + L-isoleucine + ATP = L-isoleucyl-tRNA(Ile) + AMP + diphosphate. Its function is as follows. Catalyzes the attachment of isoleucine to tRNA(Ile). As IleRS can inadvertently accommodate and process structurally similar amino acids such as valine, to avoid such errors it has two additional distinct tRNA(Ile)-dependent editing activities. One activity is designated as 'pretransfer' editing and involves the hydrolysis of activated Val-AMP. The other activity is designated 'posttransfer' editing and involves deacylation of mischarged Val-tRNA(Ile). The sequence is that of Isoleucine--tRNA ligase from Rippkaea orientalis (strain PCC 8801 / RF-1) (Cyanothece sp. (strain PCC 8801)).